A 193-amino-acid polypeptide reads, in one-letter code: Intracellular heme transport protein HutX (193 aa).

Residue Y116 coordinates heme.

In terms of assembly, homodimer. Interacts with HutZ.

It is found in the cytoplasm. Binds heme. Heme is transferred to the heme-degrading enzyme HutZ via a specific protein-protein interaction. The polypeptide is Intracellular heme transport protein HutX (Vibrio cholerae serotype O1 (strain ATCC 39315 / El Tor Inaba N16961)).